Here is a 226-residue protein sequence, read N- to C-terminus: NADH-quinone oxidoreductase subunit B 2 (226 aa).

4 residues coordinate [4Fe-4S] cluster: C37, C38, C103, and C132.

The protein belongs to the complex I 20 kDa subunit family. As to quaternary structure, NDH-1 is composed of 14 different subunits. Subunits NuoB, C, D, E, F, and G constitute the peripheral sector of the complex. [4Fe-4S] cluster serves as cofactor.

It localises to the cell membrane. It carries out the reaction a quinone + NADH + 5 H(+)(in) = a quinol + NAD(+) + 4 H(+)(out). Functionally, NDH-1 shuttles electrons from NADH, via FMN and iron-sulfur (Fe-S) centers, to quinones in the respiratory chain. The immediate electron acceptor for the enzyme in this species is believed to be a menaquinone. Couples the redox reaction to proton translocation (for every two electrons transferred, four hydrogen ions are translocated across the cytoplasmic membrane), and thus conserves the redox energy in a proton gradient. This chain is NADH-quinone oxidoreductase subunit B 2, found in Salinispora arenicola (strain CNS-205).